A 202-amino-acid chain; its full sequence is Matrix protein (202 aa).

A PPXY motif motif is present at residues 35 to 38 (PPEY). Residues 115–151 (KLRRTFIFQWADSRGPLEGEELEYSQEITWDDDTEFV) are essential for glycoprotein binding.

It belongs to the lyssavirus matrix protein family. As to quaternary structure, homomultimer. Interacts with nucleoprotein and with the cytoplasmic domain of glycoprotein. Interacts with host ATP6V1A; this interaction plays an important role in virion uncoating after viral entry.

It is found in the virion membrane. It localises to the host endomembrane system. The protein localises to the host cytoplasm. Plays a major role in assembly, budding and uncoating of virion after membrane fusion. Completely covers the ribonucleoprotein coil and keep it in condensed bullet-shaped form. Inhibits viral transcription and stimulates replication. Plays a major role in early induction of TRAIL-mediated apoptosis in infected neurons. Inhibits the integrated stress response (ISR) in the infected cell by blocking the formation of stress granules. The sequence is that of Matrix protein (M) from Rabies virus (strain ERA) (RABV).